Consider the following 147-residue polypeptide: MFQGAVALSLDAKGRLAIPARHRDALTPDGAPLVMTVHPHRCLLVYPLTAWEPIREKITSLPGMDQATLSFKRMLVGFAQEETLDAAGRVLVAQSLRQFAALDKQVWLVGQGTHFELWSDAGWQKQQEAMLALVDNPLPAGLENFVL.

2 SpoVT-AbrB domains span residues 5 to 50 (AVAL…PLTA) and 79 to 122 (AQEE…SDAG).

It belongs to the MraZ family. In terms of assembly, forms oligomers.

It localises to the cytoplasm. Its subcellular location is the nucleoid. The protein is Transcriptional regulator MraZ of Azoarcus sp. (strain BH72).